Consider the following 107-residue polypeptide: Toxin MT2730 (107 aa).

A disordered region spans residues 1-42; that stretch reads MTHKRTKRQPAIAAGLNAPRRNRVGRQHGWPADVPSAEQRRA.

Functionally, toxic component of a type II toxin-antitoxin (TA) system. Its toxic effect is neutralized by coexpression with cognate antitoxin MT2731. This chain is Toxin MT2730, found in Mycobacterium tuberculosis (strain CDC 1551 / Oshkosh).